Here is a 330-residue protein sequence, read N- to C-terminus: DNA-directed RNA polymerase subunit alpha (330 aa).

Residues 1 to 232 (MAILAFQKPE…SHFSLFAENK (232 aa)) form an alpha N-terminal domain (alpha-NTD) region. The segment at 248–330 (EDSLHMRQLL…DISKYKLDKD (83 aa)) is alpha C-terminal domain (alpha-CTD).

It belongs to the RNA polymerase alpha chain family. In terms of assembly, homodimer. The RNAP catalytic core consists of 2 alpha, 1 beta, 1 beta' and 1 omega subunit. When a sigma factor is associated with the core the holoenzyme is formed, which can initiate transcription.

It carries out the reaction RNA(n) + a ribonucleoside 5'-triphosphate = RNA(n+1) + diphosphate. Its function is as follows. DNA-dependent RNA polymerase catalyzes the transcription of DNA into RNA using the four ribonucleoside triphosphates as substrates. The sequence is that of DNA-directed RNA polymerase subunit alpha from Porphyromonas gingivalis (strain ATCC BAA-308 / W83).